The sequence spans 886 residues: Translation initiation factor IF-2 (886 aa).

Disordered regions lie at residues 46–91 and 121–297; these read LDHL…VEVR and EQQK…HGFT. Residues 72–82 are compositionally biased toward polar residues; sequence STLSVTGSTGK. Composition is skewed to basic and acidic residues over residues 130-163, 175-239, and 246-260; these read AELKAKQEAERKAKEDADRKAKEEAKRKADAERK, AKSE…DHHL, and REAEDVADARDEQGT. A tr-type G domain is found at 386-555; that stretch reads PRAPVVTVMG…LNQSELLELT (170 aa). The interval 395-402 is G1; it reads GHVDHGKT. 395 to 402 is a binding site for GTP; it reads GHVDHGKT. A G2 region spans residues 420–424; sequence GITQH. Positions 441–444 are G3; sequence DTPG. GTP contacts are provided by residues 441–445 and 495–498; these read DTPGH and NKMD. Residues 495-498 form a G4 region; sequence NKMD. Residues 531-533 are G5; sequence SAK.

It belongs to the TRAFAC class translation factor GTPase superfamily. Classic translation factor GTPase family. IF-2 subfamily.

The protein localises to the cytoplasm. Functionally, one of the essential components for the initiation of protein synthesis. Protects formylmethionyl-tRNA from spontaneous hydrolysis and promotes its binding to the 30S ribosomal subunits. Also involved in the hydrolysis of GTP during the formation of the 70S ribosomal complex. The protein is Translation initiation factor IF-2 of Pseudoalteromonas translucida (strain TAC 125).